The sequence spans 224 residues: MAIADWPAHERPREKLLTQGPAALSDAELLAIFLRVGMPGKSAVDLARELLAHFGSLGRLCHASRREFSAIHGMGPAKYAQLHALLEVARRALKEEIAYGQTLESPQSVKDFLRLTLGHRPQEVFACLFLDVRHRLIAWEELFQGTLTEARVYPREIAKRALHHNASALILSHNHPTGHVEPSESDLVLTRELCRALALLDVRVLDHMIVGRAEVYSFLEHGKM.

Positions 102–224 constitute an MPN domain; that stretch reads TLESPQSVKD…VYSFLEHGKM (123 aa). Zn(2+) is bound by residues H173, H175, and D186. The JAMM motif motif lies at 173–186; that stretch reads HNHPTGHVEPSESD.

It belongs to the UPF0758 family.

The protein is UPF0758 protein RSc2444 of Ralstonia nicotianae (strain ATCC BAA-1114 / GMI1000) (Ralstonia solanacearum).